The primary structure comprises 271 residues: Protein-L-isoaspartate O-methyltransferase (271 aa).

The segment covering 1–15 (MRKPVTPPGNPPRPR) has biased composition (pro residues). The segment at 1–60 (MRKPVTPPGNPPRPRSPGYGSTSLAPGITAANSNTRISPPTLARPAPAAGAGGQGGNLGL) is disordered. A compositionally biased stretch (low complexity) spans 39–49 (PPTLARPAPAA). S119 is an active-site residue.

The protein belongs to the methyltransferase superfamily. L-isoaspartyl/D-aspartyl protein methyltransferase family.

The protein localises to the cytoplasm. The enzyme catalyses [protein]-L-isoaspartate + S-adenosyl-L-methionine = [protein]-L-isoaspartate alpha-methyl ester + S-adenosyl-L-homocysteine. Its function is as follows. Catalyzes the methyl esterification of L-isoaspartyl residues in peptides and proteins that result from spontaneous decomposition of normal L-aspartyl and L-asparaginyl residues. It plays a role in the repair and/or degradation of damaged proteins. This is Protein-L-isoaspartate O-methyltransferase from Bordetella petrii (strain ATCC BAA-461 / DSM 12804 / CCUG 43448).